A 161-amino-acid polypeptide reads, in one-letter code: uncharacterized protein (161 aa).

Disordered stretches follow at residues 47 to 83 and 104 to 137; these read KPAK…NNIN and RRLQ…SKNY. The segment covering 50–64 has biased composition (basic residues); sequence KRNIHGHNNHTRSSN. Composition is skewed to low complexity over residues 73–83 and 115–130; these read NINHNNNNNIN and SSSS…TNDN.

This is an uncharacterized protein from Dictyostelium discoideum (Social amoeba).